The chain runs to 464 residues: Soluble pyridine nucleotide transhydrogenase (464 aa).

Position 35–44 (35–44) interacts with FAD; the sequence is DSRRQVGGNC.

The protein belongs to the class-I pyridine nucleotide-disulfide oxidoreductase family. FAD serves as cofactor.

It is found in the cytoplasm. It catalyses the reaction NAD(+) + NADPH = NADH + NADP(+). In terms of biological role, conversion of NADPH, generated by peripheral catabolic pathways, to NADH, which can enter the respiratory chain for energy generation. This is Soluble pyridine nucleotide transhydrogenase from Pseudomonas fluorescens (strain SBW25).